A 401-amino-acid polypeptide reads, in one-letter code: Probable 2,3-bisphosphoglycerate-independent phosphoglycerate mutase (401 aa).

The protein belongs to the BPG-independent phosphoglycerate mutase family. A-PGAM subfamily.

The enzyme catalyses (2R)-2-phosphoglycerate = (2R)-3-phosphoglycerate. The protein operates within carbohydrate degradation; glycolysis; pyruvate from D-glyceraldehyde 3-phosphate: step 3/5. Its function is as follows. Catalyzes the interconversion of 2-phosphoglycerate and 3-phosphoglycerate. This chain is Probable 2,3-bisphosphoglycerate-independent phosphoglycerate mutase, found in Thermotoga sp. (strain RQ2).